Here is a 566-residue protein sequence, read N- to C-terminus: Potassium-transporting ATPase potassium-binding subunit (566 aa).

The next 12 membrane-spanning stretches (helical) occupy residues 6-26 (VALL…LGIA), 60-80 (AAAI…LMLF), 128-148 (LGLT…AFVL), 167-187 (IWRI…LFLA), 247-267 (LTNF…CICF), 276-296 (VGSA…LLIM), 331-351 (FGLW…CGAV), 361-381 (LGGL…GGVG), 383-403 (GWYG…LMIG), 423-443 (IGLL…VILP), 492-512 (LMFV…GALI), and 530-550 (LFVG…FIPA).

This sequence belongs to the KdpA family. The system is composed of three essential subunits: KdpA, KdpB and KdpC.

The protein localises to the cell inner membrane. Its function is as follows. Part of the high-affinity ATP-driven potassium transport (or Kdp) system, which catalyzes the hydrolysis of ATP coupled with the electrogenic transport of potassium into the cytoplasm. This subunit binds the periplasmic potassium ions and delivers the ions to the membrane domain of KdpB through an intramembrane tunnel. The protein is Potassium-transporting ATPase potassium-binding subunit of Tolumonas auensis (strain DSM 9187 / NBRC 110442 / TA 4).